The chain runs to 49 residues: Large ribosomal subunit protein bL34 (49 aa).

The protein belongs to the bacterial ribosomal protein bL34 family.

The sequence is that of Large ribosomal subunit protein bL34 from Sorangium cellulosum (strain So ce56) (Polyangium cellulosum (strain So ce56)).